The following is a 978-amino-acid chain: NACHT, LRR and PYD domains-containing protein 4E (978 aa).

Residues 1–93 (MASFFSDFGL…MERAGREIAG (93 aa)) form the Pyrin domain. Residues 148–471 (HMVFLQGVAG…FHLLKSHVDH (324 aa)) enclose the NACHT domain. 154 to 161 (GVAGIGKS) contributes to the ATP binding site. 6 LRR repeats span residues 594–617 (CSTL…HSYT), 694–717 (LLNL…LNQA), 746–773 (SKML…LCHP), 802–825 (NKTL…VLCG), 859–882 (NQNL…LLCD), and 916–940 (CKTL…LFEA).

Belongs to the NLRP family.

In terms of biological role, may be involved in inflammation and recognition of cytosolic pathogen-associated molecular patterns (PAMPs) not intercepted by membrane-bound receptors. This is NACHT, LRR and PYD domains-containing protein 4E (Nlrp4e) from Mus musculus (Mouse).